We begin with the raw amino-acid sequence, 499 residues long: Glycerol kinase (499 aa).

T13 lines the ADP pocket. Residues T13, T14, and S15 each coordinate ATP. Sn-glycerol 3-phosphate is bound at residue T13. R17 lines the ADP pocket. R83, E84, Y135, and D245 together coordinate sn-glycerol 3-phosphate. Residues R83, E84, Y135, D245, and Q246 each contribute to the glycerol site. ADP contacts are provided by T267 and G310. ATP-binding residues include T267, G310, Q314, and G411. Positions 411 and 415 each coordinate ADP.

This sequence belongs to the FGGY kinase family.

It carries out the reaction glycerol + ATP = sn-glycerol 3-phosphate + ADP + H(+). The protein operates within polyol metabolism; glycerol degradation via glycerol kinase pathway; sn-glycerol 3-phosphate from glycerol: step 1/1. With respect to regulation, inhibited by fructose 1,6-bisphosphate (FBP). Its function is as follows. Key enzyme in the regulation of glycerol uptake and metabolism. Catalyzes the phosphorylation of glycerol to yield sn-glycerol 3-phosphate. The chain is Glycerol kinase from Xanthomonas axonopodis pv. citri (strain 306).